Reading from the N-terminus, the 226-residue chain is Leucyl/phenylalanyl-tRNA--protein transferase (226 aa).

The protein belongs to the L/F-transferase family.

The protein resides in the cytoplasm. The catalysed reaction is N-terminal L-lysyl-[protein] + L-leucyl-tRNA(Leu) = N-terminal L-leucyl-L-lysyl-[protein] + tRNA(Leu) + H(+). It carries out the reaction N-terminal L-arginyl-[protein] + L-leucyl-tRNA(Leu) = N-terminal L-leucyl-L-arginyl-[protein] + tRNA(Leu) + H(+). The enzyme catalyses L-phenylalanyl-tRNA(Phe) + an N-terminal L-alpha-aminoacyl-[protein] = an N-terminal L-phenylalanyl-L-alpha-aminoacyl-[protein] + tRNA(Phe). Functions in the N-end rule pathway of protein degradation where it conjugates Leu, Phe and, less efficiently, Met from aminoacyl-tRNAs to the N-termini of proteins containing an N-terminal arginine or lysine. The chain is Leucyl/phenylalanyl-tRNA--protein transferase from Salinibacter ruber (strain DSM 13855 / M31).